The following is a 541-amino-acid chain: Apolipoprotein N-acyltransferase (541 aa).

The next 6 membrane-spanning stretches (helical) occupy residues Met21 to Leu41, Leu54 to Leu74, Val89 to Val109, Ile116 to Cys136, Phe157 to Phe177, and Tyr189 to Leu209. The 282-residue stretch at Leu219–Met500 folds into the CN hydrolase domain. The Proton acceptor role is filled by Glu265. Lys350 is a catalytic residue. Residue Cys405 is the Nucleophile of the active site. Residues Leu506–Ile526 traverse the membrane as a helical segment.

The protein belongs to the CN hydrolase family. Apolipoprotein N-acyltransferase subfamily.

It localises to the cell inner membrane. The enzyme catalyses N-terminal S-1,2-diacyl-sn-glyceryl-L-cysteinyl-[lipoprotein] + a glycerophospholipid = N-acyl-S-1,2-diacyl-sn-glyceryl-L-cysteinyl-[lipoprotein] + a 2-acyl-sn-glycero-3-phospholipid + H(+). Its pathway is protein modification; lipoprotein biosynthesis (N-acyl transfer). In terms of biological role, catalyzes the phospholipid dependent N-acylation of the N-terminal cysteine of apolipoprotein, the last step in lipoprotein maturation. The sequence is that of Apolipoprotein N-acyltransferase from Chlamydia caviae (strain ATCC VR-813 / DSM 19441 / 03DC25 / GPIC) (Chlamydophila caviae).